Consider the following 292-residue polypeptide: 4-diphosphocytidyl-2-C-methyl-D-erythritol kinase (292 aa).

Lys-20 is an active-site residue. Position 103–113 (103–113) interacts with ATP; sequence PMGGGIGGGSS. Asp-145 is an active-site residue.

The protein belongs to the GHMP kinase family. IspE subfamily.

It carries out the reaction 4-CDP-2-C-methyl-D-erythritol + ATP = 4-CDP-2-C-methyl-D-erythritol 2-phosphate + ADP + H(+). Its pathway is isoprenoid biosynthesis; isopentenyl diphosphate biosynthesis via DXP pathway; isopentenyl diphosphate from 1-deoxy-D-xylulose 5-phosphate: step 3/6. Functionally, catalyzes the phosphorylation of the position 2 hydroxy group of 4-diphosphocytidyl-2C-methyl-D-erythritol. This Cupriavidus taiwanensis (strain DSM 17343 / BCRC 17206 / CCUG 44338 / CIP 107171 / LMG 19424 / R1) (Ralstonia taiwanensis (strain LMG 19424)) protein is 4-diphosphocytidyl-2-C-methyl-D-erythritol kinase.